A 549-amino-acid polypeptide reads, in one-letter code: Probable protein kinase UbiB (549 aa).

One can recognise a Protein kinase domain in the interval 123–501 (DFEDTPLASA…QQKAHKSNYL (379 aa)). ATP is bound by residues 129–137 (LASASISQV) and Lys-152. Asp-287 (proton acceptor) is an active-site residue. 2 helical membrane-spanning segments follow: residues 498-518 (SNYLLITSAILVICGTILLNQ) and 520-540 (ATLWASYGSIGTGLILWVLGW).

This sequence belongs to the ABC1 family. UbiB subfamily.

The protein resides in the cell inner membrane. It participates in cofactor biosynthesis; ubiquinone biosynthesis [regulation]. Functionally, is probably a protein kinase regulator of UbiI activity which is involved in aerobic coenzyme Q (ubiquinone) biosynthesis. This is Probable protein kinase UbiB from Shewanella piezotolerans (strain WP3 / JCM 13877).